Consider the following 311-residue polypeptide: tRNA-cytidine(32) 2-sulfurtransferase (311 aa).

Positions 58 to 63 (SGGKDS) match the PP-loop motif motif. [4Fe-4S] cluster contacts are provided by Cys-133, Cys-136, and Cys-224.

Belongs to the TtcA family. In terms of assembly, homodimer. It depends on Mg(2+) as a cofactor. Requires [4Fe-4S] cluster as cofactor.

The protein resides in the cytoplasm. The enzyme catalyses cytidine(32) in tRNA + S-sulfanyl-L-cysteinyl-[cysteine desulfurase] + AH2 + ATP = 2-thiocytidine(32) in tRNA + L-cysteinyl-[cysteine desulfurase] + A + AMP + diphosphate + H(+). Its pathway is tRNA modification. Catalyzes the ATP-dependent 2-thiolation of cytidine in position 32 of tRNA, to form 2-thiocytidine (s(2)C32). The sulfur atoms are provided by the cysteine/cysteine desulfurase (IscS) system. The polypeptide is tRNA-cytidine(32) 2-sulfurtransferase (Polaromonas sp. (strain JS666 / ATCC BAA-500)).